We begin with the raw amino-acid sequence, 155 residues long: SsrA-binding protein (155 aa).

This sequence belongs to the SmpB family.

The protein resides in the cytoplasm. Its function is as follows. Required for rescue of stalled ribosomes mediated by trans-translation. Binds to transfer-messenger RNA (tmRNA), required for stable association of tmRNA with ribosomes. tmRNA and SmpB together mimic tRNA shape, replacing the anticodon stem-loop with SmpB. tmRNA is encoded by the ssrA gene; the 2 termini fold to resemble tRNA(Ala) and it encodes a 'tag peptide', a short internal open reading frame. During trans-translation Ala-aminoacylated tmRNA acts like a tRNA, entering the A-site of stalled ribosomes, displacing the stalled mRNA. The ribosome then switches to translate the ORF on the tmRNA; the nascent peptide is terminated with the 'tag peptide' encoded by the tmRNA and targeted for degradation. The ribosome is freed to recommence translation, which seems to be the essential function of trans-translation. This Streptococcus equi subsp. zooepidemicus (strain H70) protein is SsrA-binding protein.